A 762-amino-acid polypeptide reads, in one-letter code: Endothelin-converting enzyme 1 (762 aa).

The Cytoplasmic portion of the chain corresponds to 1–60; it reads MGSLRPPQGLGLQWSSFFLGKKGPGLTVSLPLLASSLQVNFRSPRSGQRCWAARTSVEKR. Residues 61–81 traverse the membrane as a helical; Signal-anchor for type II membrane protein segment; it reads LVVLVTLLAAGLVACLAALGI. At 82-762 the chain is on the extracellular side; that stretch reads QYRTRTPPVC…MNPRHKCEVW (681 aa). Positions 90-762 constitute a Peptidase M13 domain; sequence VCLTEACVSV…MNPRHKCEVW (673 aa). 5 disulfide bridges follow: Cys-91-Cys-96, Cys-114-Cys-747, Cys-122-Cys-707, Cys-177-Cys-427, and Cys-636-Cys-759. N-linked (GlcNAc...) asparagine glycosylation is found at Asn-158, Asn-179, Asn-202, Asn-262, Asn-308, Asn-354, Asn-375, and Asn-531. Zn(2+) is bound at residue His-599. Glu-600 is an active-site residue. His-603 lines the Zn(2+) pocket. N-linked (GlcNAc...) asparagine glycans are attached at residues Asn-624 and Asn-643. A Zn(2+)-binding site is contributed by Glu-659. Asp-663 serves as the catalytic Proton donor.

This sequence belongs to the peptidase M13 family. Homodimer; disulfide-linked. Interacts with PPP1R16B. Interacts with TSPAN8; this interaction recruits the endothelin converting enzyme ECE1 to tetraspanin-enriched microdomains and positively modulates its enzymatic activity. The cofactor is Zn(2+). In terms of tissue distribution, all isoforms are expressed in aortic endothelial cells. Isoform A is also expressed in liver; isoform B in smooth muscle cells and fibroblasts; isoform C in aortic endothelial cells, smooth muscle cells, fibroblasts, liver and lung, and isoform D in smooth muscle cells.

Its subcellular location is the cell membrane. The enzyme catalyses Hydrolysis of the 21-Trp-|-Val-22 bond in big endothelin to form endothelin 1.. With respect to regulation, inhibited by phosphoramidon. Functionally, converts big endothelin-1 to endothelin-1. The sequence is that of Endothelin-converting enzyme 1 (Ece1) from Rattus norvegicus (Rat).